A 79-amino-acid polypeptide reads, in one-letter code: Cytochrome b (79 aa).

Helical transmembrane passes span 1 to 7 (TALLLAM), 31 to 52 (WLIR…YLHI), and 67 to 79 (WNIG…TLMA). His-37 and His-51 together coordinate heme b.

The protein belongs to the cytochrome b family. As to quaternary structure, the cytochrome bc1 complex contains 11 subunits: 3 respiratory subunits (MT-CYB, CYC1 and UQCRFS1), 2 core proteins (UQCRC1 and UQCRC2) and 6 low-molecular weight proteins (UQCRH/QCR6, UQCRB/QCR7, UQCRQ/QCR8, UQCR10/QCR9, UQCR11/QCR10 and a cleavage product of UQCRFS1). This cytochrome bc1 complex then forms a dimer. It depends on heme b as a cofactor.

It localises to the mitochondrion inner membrane. Component of the ubiquinol-cytochrome c reductase complex (complex III or cytochrome b-c1 complex) that is part of the mitochondrial respiratory chain. The b-c1 complex mediates electron transfer from ubiquinol to cytochrome c. Contributes to the generation of a proton gradient across the mitochondrial membrane that is then used for ATP synthesis. This is Cytochrome b (MT-CYB) from Corcorax melanoramphos (White-winged chough).